The following is a 116-amino-acid chain: MASKGKKPLRRTTTRRRKRSHFKNPSPPCSINSDVTSTSSTSTSPTSTATPSPVSAESGCCTPEKSRIPEMLTCPPAPKKQKVAQNCALRRRQIAFFAPPDVELFFVFALGQQNNK.

The segment covering 1–22 (MASKGKKPLRRTTTRRRKRSHF) has biased composition (basic residues). The interval 1 to 62 (MASKGKKPLR…PVSAESGCCT (62 aa)) is disordered. Residues 35–56 (VTSTSSTSTSPTSTATPSPVSA) are compositionally biased toward low complexity.

In terms of biological role, probable cyclin-dependent protein kinase (CDK) inhibitor that functions as a repressor of mitosis in the endoreduplication cell cycle. This Arabidopsis thaliana (Mouse-ear cress) protein is Cyclin-dependent protein kinase inhibitor SMR9.